A 319-amino-acid chain; its full sequence is HTH-type transcriptional regulator YidZ (319 aa).

Positions 8–65 (LDLNLLLCLQLLMQERSVTKAAKRMNVTPSAVSKSLAKLRAWFDDPLFVNTPLGLAPT) constitute an HTH lysR-type domain. The segment at residues 25-44 (VTKAAKRMNVTPSAVSKSLA) is a DNA-binding region (H-T-H motif).

It belongs to the LysR transcriptional regulatory family.

Its function is as follows. Involved in anaerobic NO protection. This chain is HTH-type transcriptional regulator YidZ, found in Salmonella typhi.